A 364-amino-acid chain; its full sequence is Histidinol-phosphate aminotransferase (364 aa).

N6-(pyridoxal phosphate)lysine is present on lysine 226.

This sequence belongs to the class-II pyridoxal-phosphate-dependent aminotransferase family. Histidinol-phosphate aminotransferase subfamily. Homodimer. Requires pyridoxal 5'-phosphate as cofactor.

It carries out the reaction L-histidinol phosphate + 2-oxoglutarate = 3-(imidazol-4-yl)-2-oxopropyl phosphate + L-glutamate. It functions in the pathway amino-acid biosynthesis; L-histidine biosynthesis; L-histidine from 5-phospho-alpha-D-ribose 1-diphosphate: step 7/9. The chain is Histidinol-phosphate aminotransferase from Campylobacter jejuni subsp. jejuni serotype O:6 (strain 81116 / NCTC 11828).